Here is a 298-residue protein sequence, read N- to C-terminus: DNA-3-methyladenine glycosylase (298 aa).

The transit peptide at 1-17 directs the protein to the mitochondrion; it reads MVTPALQMKKPKQFCRR. A disordered region spans residues 1–65; sequence MVTPALQMKK…CPRERCLGPP (65 aa). Over residues 9 to 25 the composition is skewed to basic residues; the sequence is KKPKQFCRRMGQKKQRP. 2 positions are modified to phosphoserine: serine 78 and serine 252.

It belongs to the DNA glycosylase MPG family. In terms of assembly, binds MBD1. Binds SSBP1.

It localises to the cytoplasm. The protein resides in the mitochondrion matrix. It is found in the mitochondrion nucleoid. Its subcellular location is the nucleus. The catalysed reaction is Hydrolysis of alkylated DNA, releasing 3-methyladenine, 3-methylguanine, 7-methylguanine and 7-methyladenine.. Binding to SSBP1 in mitochondria inhibits glycosylase activity in the context of a single-stranded DNA (ssDNA), but not a double-stranded DNA (dsDNA) substrates. Hydrolysis of the deoxyribose N-glycosidic bond to excise 3-methyladenine, and 7-methylguanine from the damaged DNA polymer formed by alkylation lesions. The protein is DNA-3-methyladenine glycosylase (MPG) of Homo sapiens (Human).